A 171-amino-acid polypeptide reads, in one-letter code: S-ribosylhomocysteine lyase (171 aa).

His54, His58, and Cys128 together coordinate Fe cation.

This sequence belongs to the LuxS family. In terms of assembly, homodimer. Requires Fe cation as cofactor.

It catalyses the reaction S-(5-deoxy-D-ribos-5-yl)-L-homocysteine = (S)-4,5-dihydroxypentane-2,3-dione + L-homocysteine. In terms of biological role, involved in the synthesis of autoinducer 2 (AI-2) which is secreted by bacteria and is used to communicate both the cell density and the metabolic potential of the environment. The regulation of gene expression in response to changes in cell density is called quorum sensing. Catalyzes the transformation of S-ribosylhomocysteine (RHC) to homocysteine (HC) and 4,5-dihydroxy-2,3-pentadione (DPD). This Proteus mirabilis (strain HI4320) protein is S-ribosylhomocysteine lyase.